Here is a 448-residue protein sequence, read N- to C-terminus: Phosphoglucosamine mutase (448 aa).

S89 acts as the Phosphoserine intermediate in catalysis. S89, D232, D234, and D236 together coordinate Mg(2+). Position 89 is a phosphoserine (S89).

Belongs to the phosphohexose mutase family. In terms of assembly, forms large aggregates. Mg(2+) serves as cofactor. Activated by phosphorylation.

The enzyme catalyses alpha-D-glucosamine 1-phosphate = D-glucosamine 6-phosphate. Catalyzes the conversion of glucosamine-6-phosphate to glucosamine-1-phosphate. This is Phosphoglucosamine mutase (glmM) from Methanocaldococcus jannaschii (strain ATCC 43067 / DSM 2661 / JAL-1 / JCM 10045 / NBRC 100440) (Methanococcus jannaschii).